A 516-amino-acid chain; its full sequence is Membrane-bound transcription factor site-2 protease (516 aa).

Residues 1–3 (MIP) are Cytoplasmic-facing. Residues 4-24 (VSLVVVVVGGWTAVYLTDLVL) traverse the membrane as a helical segment. Topologically, residues 25-74 (KSSVYFKHSYEDWLENNGLSISPFHIRWQTAVFNRAFYSWGRRKARMLYQ) are lumenal. 2 consecutive transmembrane segments (helical) span residues 75-95 (WFNFGMVFGVIAMFSSFFLLG) and 96-107 (KTLIQTLGQMMA). The Lumenal segment spans residues 108-141 (DSSYSSSSSSSSHSSSSSSSSSSSSSLYNEQVLQ). Residues 142–166 (VVVPGINLPVNQLTYFFAAVLISGV) form a helical membrane-spanning segment. Position 168 (His168) interacts with Zn(2+). Residue Glu169 is part of the active site. A run of 3 helical transmembrane segments spans residues 171–183 (GHGIAAIREQVRF), 184–206 (NGFGIFLFIIYPGAFVDLFTTHL), and 226–248 (FILALLGILALILLPVILLPFYY). His172 contributes to the Zn(2+) binding site. The Lumenal portion of the chain corresponds to 249-443 (TGVGVLITEV…LPVVVETFVK (195 aa)). Asn334 carries an N-linked (GlcNAc...) asparagine glycan. Transmembrane regions (helical) follow at residues 444-461 (YLISLSGALAIVNAVPCF) and 462-473 (ALDGQWILNSFL). The Lumenal portion of the chain corresponds to 474 to 489 (DATLTSVIGDNDVKDL). Residues 490-510 (IGFFILLGGSILLAANVALGL) traverse the membrane as a helical segment. At 511–516 (WMVTAR) the chain is on the cytoplasmic side.

The protein belongs to the peptidase M50A family. Zn(2+) is required as a cofactor.

It is found in the membrane. It localises to the cytoplasm. The protein localises to the golgi apparatus membrane. It carries out the reaction Cleaves several transcription factors that are type-2 transmembrane proteins within membrane-spanning domains. Known substrates include sterol regulatory element-binding protein (SREBP) -1, SREBP-2 and forms of the transcriptional activator ATF6. SREBP-2 is cleaved at the site 477-DRSRILL-|-CVLTFLCLSFNPLTSLLQWGGA-505. The residues Asn-Pro, 11 residues distal to the site of cleavage in the membrane-spanning domain, are important for cleavage by S2P endopeptidase. Replacement of either of these residues does not prevent cleavage, but there is no cleavage if both of these residues are replaced.. Its function is as follows. Zinc metalloprotease that mediates intramembrane proteolysis of proteins such as ATF6, ATF6B, SREBF1/SREBP1 and SREBF2/SREBP2. Catalyzes the second step in the proteolytic activation of the sterol regulatory element-binding proteins (SREBPs) SREBF1/SREBP1 and SREBF2/SREBP2: cleaves SREBPs within the first transmembrane segment, thereby releasing the N-terminal segment with a portion of the transmembrane segment attached. Mature N-terminal SREBP fragments shuttle to the nucleus and activate gene transcription. Also mediates the second step in the proteolytic activation of the cyclic AMP-dependent transcription factor ATF-6 (ATF6 and ATF6B). Involved in intramembrane proteolysis during bone formation. In astrocytes and osteoblasts, upon DNA damage and ER stress, mediates the second step of the regulated intramembrane proteolytic activation of the transcription factor CREB3L1, leading to the inhibition of cell-cycle progression. This Bos taurus (Bovine) protein is Membrane-bound transcription factor site-2 protease.